Consider the following 258-residue polypeptide: Acyl-[acyl-carrier-protein]--UDP-N-acetylglucosamine O-acyltransferase (258 aa).

This sequence belongs to the transferase hexapeptide repeat family. LpxA subfamily. Homotrimer.

It is found in the cytoplasm. It carries out the reaction a (3R)-hydroxyacyl-[ACP] + UDP-N-acetyl-alpha-D-glucosamine = a UDP-3-O-[(3R)-3-hydroxyacyl]-N-acetyl-alpha-D-glucosamine + holo-[ACP]. It participates in glycolipid biosynthesis; lipid IV(A) biosynthesis; lipid IV(A) from (3R)-3-hydroxytetradecanoyl-[acyl-carrier-protein] and UDP-N-acetyl-alpha-D-glucosamine: step 1/6. Functionally, involved in the biosynthesis of lipid A, a phosphorylated glycolipid that anchors the lipopolysaccharide to the outer membrane of the cell. This is Acyl-[acyl-carrier-protein]--UDP-N-acetylglucosamine O-acyltransferase from Alkalilimnicola ehrlichii (strain ATCC BAA-1101 / DSM 17681 / MLHE-1).